The sequence spans 250 residues: PF03932 family protein CutC (250 aa).

It belongs to the CutC family.

It localises to the cytoplasm. This is PF03932 family protein CutC from Proteus mirabilis (strain HI4320).